Here is a 352-residue protein sequence, read N- to C-terminus: UDP-N-acetylglucosamine--N-acetylmuramyl-(pentapeptide) pyrophosphoryl-undecaprenol N-acetylglucosamine transferase (352 aa).

UDP-N-acetyl-alpha-D-glucosamine is bound by residues 11-13 (TGG), Asn120, Arg161, Ser188, and Gln286.

Belongs to the glycosyltransferase 28 family. MurG subfamily.

It localises to the cell inner membrane. The enzyme catalyses di-trans,octa-cis-undecaprenyl diphospho-N-acetyl-alpha-D-muramoyl-L-alanyl-D-glutamyl-meso-2,6-diaminopimeloyl-D-alanyl-D-alanine + UDP-N-acetyl-alpha-D-glucosamine = di-trans,octa-cis-undecaprenyl diphospho-[N-acetyl-alpha-D-glucosaminyl-(1-&gt;4)]-N-acetyl-alpha-D-muramoyl-L-alanyl-D-glutamyl-meso-2,6-diaminopimeloyl-D-alanyl-D-alanine + UDP + H(+). Its pathway is cell wall biogenesis; peptidoglycan biosynthesis. Functionally, cell wall formation. Catalyzes the transfer of a GlcNAc subunit on undecaprenyl-pyrophosphoryl-MurNAc-pentapeptide (lipid intermediate I) to form undecaprenyl-pyrophosphoryl-MurNAc-(pentapeptide)GlcNAc (lipid intermediate II). The sequence is that of UDP-N-acetylglucosamine--N-acetylmuramyl-(pentapeptide) pyrophosphoryl-undecaprenol N-acetylglucosamine transferase from Prochlorococcus marinus (strain NATL1A).